The chain runs to 300 residues: PTB domain-containing engulfment adapter protein 1 (300 aa).

One can recognise a PID domain in the interval 21–176; it reads AKHFIPYNAK…GGLQKRIQDL (156 aa). Residues 160 to 199 adopt a coiled-coil conformation; sequence VETRKQIGGLQKRIQDLETENVELKKQLQVLEEQLMIAQV.

The protein belongs to the ced-6 family.

Its subcellular location is the cytoplasm. In terms of biological role, may function as an adapter protein. Required for efficient phagocytosis of apoptotic cells. May play a role in the internalization and endosomal trafficking of various lrp1 ligands. This is PTB domain-containing engulfment adapter protein 1 (gulp1) from Danio rerio (Zebrafish).